The following is a 444-amino-acid chain: Transcription activator AKTR-3 (444 aa).

Residues 16 to 43 constitute a DNA-binding region (zn(2)-C6 fungal-type); sequence CDFCTQSKLRCNKNKPSCRRCTIQQQPC. The segment at 49–89 is disordered; that stretch reads RRTGRPPKHPRTANDCQEANGQHGEQDPVTSTPGGSCQQQS. Residues 50 to 59 show a composition bias toward basic residues; that stretch reads RTGRPPKHPR. A compositionally biased stretch (polar residues) spans 76-89; the sequence is PVTSTPGGSCQQQS.

The protein resides in the nucleus. Functionally, transcription factor that regulates the expression of the gene clusters that mediate the biosynthesis of the host-selective toxins (HSTs) AK-toxins responsible for Japanese pear black spot disease by the Japanese pear pathotype. AK-toxins are esters of 9,10-epoxy 8-hydroxy 9-methyldecatrienoic acid (EDA). On cellular level, AK-toxins affect plasma membrane of susceptible cells and cause a sudden increase in loss of K(+) after a few minutes of toxin treatment. The chain is Transcription activator AKTR-3 from Alternaria alternata (Alternaria rot fungus).